Here is a 33-residue protein sequence, read N- to C-terminus: IDPLTILKILKGGLKSICKHRKYLDKACASIGQ.

As to quaternary structure, heterodimer composed of subunit A and subunit B (DELTA-PSDTX-Pp1a); disulfide-linked. In terms of tissue distribution, expressed by the venom gland.

It localises to the secreted. Its function is as follows. This heterodimer has insecticidal and cytotoxic properties. Induces immediate paralysis when injected into blowflies (Lucilia cuprina), and then death within 24 hours. Also inhibits the growth of Aedes albopictus mosquito C6/36 cells. The polypeptide is DELTA-pseudomyrmecitoxin-Pp1a subunit B (Pseudomyrmex penetrator (Ant)).